The following is a 397-amino-acid chain: Acetate kinase (397 aa).

N8 lines the Mg(2+) pocket. K15 provides a ligand contact to ATP. R90 is a binding site for substrate. D147 serves as the catalytic Proton donor/acceptor. ATP is bound at residue 207–211; that stretch reads HLGAG. E382 is a Mg(2+) binding site.

This sequence belongs to the acetokinase family. In terms of assembly, homodimer. Mg(2+) serves as cofactor. Mn(2+) is required as a cofactor.

It is found in the cytoplasm. The catalysed reaction is acetate + ATP = acetyl phosphate + ADP. Its pathway is metabolic intermediate biosynthesis; acetyl-CoA biosynthesis; acetyl-CoA from acetate: step 1/2. In terms of biological role, catalyzes the formation of acetyl phosphate from acetate and ATP. Can also catalyze the reverse reaction. This is Acetate kinase from Lactiplantibacillus plantarum (strain ATCC BAA-793 / NCIMB 8826 / WCFS1) (Lactobacillus plantarum).